We begin with the raw amino-acid sequence, 28 residues long: Dolichyl-diphosphooligosaccharide--protein glycosyltransferase subunit 1 (28 aa).

The protein belongs to the OST1 family. In terms of assembly, component of the oligosaccharyltransferase (OST) complex.

The protein resides in the endoplasmic reticulum membrane. It functions in the pathway protein modification; protein glycosylation. Subunit of the oligosaccharyl transferase (OST) complex that catalyzes the initial transfer of a defined glycan (Glc(3)Man(9)GlcNAc(2) in eukaryotes) from the lipid carrier dolichol-pyrophosphate to an asparagine residue within an Asn-X-Ser/Thr consensus motif in nascent polypeptide chains, the first step in protein N-glycosylation. N-glycosylation occurs cotranslationally and the complex associates with the Sec61 complex at the channel-forming translocon complex that mediates protein translocation across the endoplasmic reticulum (ER). All subunits are required for a maximal enzyme activity. This chain is Dolichyl-diphosphooligosaccharide--protein glycosyltransferase subunit 1, found in Gallus gallus (Chicken).